Consider the following 391-residue polypeptide: Putative protein PLEKHA9 (391 aa).

The polypeptide is Putative protein PLEKHA9 (PLEKHA8P1) (Homo sapiens (Human)).